A 158-amino-acid polypeptide reads, in one-letter code: Endoribonuclease YbeY (158 aa).

Zn(2+) contacts are provided by H119, H123, and H129.

Belongs to the endoribonuclease YbeY family. The cofactor is Zn(2+).

It localises to the cytoplasm. In terms of biological role, single strand-specific metallo-endoribonuclease involved in late-stage 70S ribosome quality control and in maturation of the 3' terminus of the 16S rRNA. The sequence is that of Endoribonuclease YbeY from Shewanella woodyi (strain ATCC 51908 / MS32).